The chain runs to 633 residues: Uracil permease (633 aa).

Transmembrane regions (helical) follow at residues 143 to 163, 173 to 193, 197 to 217, 242 to 262, 268 to 288, 310 to 330, 350 to 370, 400 to 420, 442 to 462, 465 to 485, 521 to 541, and 559 to 579; these read WWQC…FVVL, LSFP…WPVI, VMAI…VSLM, YEFM…LVPP, LFTV…IWAI, FSWA…TMVI, LVCI…VTAA, AGVF…NISA, GSLF…MATS, FTMA…VVCS, ALAA…AEVG, and YWVG…FFPV.

The protein belongs to the purine-cytosine permease (2.A.39) family. Post-translationally, glycosylated (possible); but there is not yet direct biochemical evidence for it.

It is found in the membrane. In terms of biological role, transport of uracil. The protein is Uracil permease (FUR4) of Saccharomyces cerevisiae (strain ATCC 204508 / S288c) (Baker's yeast).